Here is an 80-residue protein sequence, read N- to C-terminus: Omega-conotoxin-like 1 (80 aa).

A signal peptide spans 1 to 22 (MKLTCVLIVVVLFLTACQLITT). Positions 23–49 (DDSTGKQRYQAWKLRSKMQNSVLSRLS) are excised as a propeptide. 3 cysteine pairs are disulfide-bonded: C52-C66, C59-C70, and C65-C79.

This sequence belongs to the conotoxin O1 superfamily. Peptide predicted to begin at Arg-51, but it seems more probable that it begins at Cys-52, since this position corresponds to a dibasic residue cleavage. In terms of tissue distribution, expressed by the venom duct.

Its subcellular location is the secreted. In terms of biological role, omega-conotoxins act at presynaptic membranes, they bind and block voltage-gated calcium channels (Cav). The sequence is that of Omega-conotoxin-like 1 from Conus capitaneus (Captain cone).